The chain runs to 648 residues: Probable ATP-dependent RNA helicase DDX43 (648 aa).

Residues M1–A60 are disordered. A compositionally biased stretch (low complexity) spans A10–R25. Residues A26–N36 show a composition bias toward basic and acidic residues. The 62-residue stretch at E67–I128 folds into the KH domain. Residues T242–S270 carry the Q motif motif. A Helicase ATP-binding domain is found at W273–V448. A286 to T293 is a binding site for ATP. The DEAD box motif lies at D396 to D399. Residues S460–A621 enclose the Helicase C-terminal domain. Residues Q628–Q641 are compositionally biased toward basic and acidic residues. A disordered region spans residues Q628–H648.

It belongs to the DEAD box helicase family. As to expression, expressed in testis. Expressed in many tumors of various histological types at a level that is 100-fold higher than the level observed in normal tissues except testis.

It catalyses the reaction ATP + H2O = ADP + phosphate + H(+). The sequence is that of Probable ATP-dependent RNA helicase DDX43 (DDX43) from Homo sapiens (Human).